The chain runs to 158 residues: 6,7-dimethyl-8-ribityllumazine synthase (158 aa).

Residues W27, 58 to 60 (SFE), and 81 to 83 (VII) each bind 5-amino-6-(D-ribitylamino)uracil. Residue 86 to 87 (GT) coordinates (2S)-2-hydroxy-3-oxobutyl phosphate. Catalysis depends on H89, which acts as the Proton donor. F114 contributes to the 5-amino-6-(D-ribitylamino)uracil binding site. R128 provides a ligand contact to (2S)-2-hydroxy-3-oxobutyl phosphate.

It belongs to the DMRL synthase family.

The catalysed reaction is (2S)-2-hydroxy-3-oxobutyl phosphate + 5-amino-6-(D-ribitylamino)uracil = 6,7-dimethyl-8-(1-D-ribityl)lumazine + phosphate + 2 H2O + H(+). It functions in the pathway cofactor biosynthesis; riboflavin biosynthesis; riboflavin from 2-hydroxy-3-oxobutyl phosphate and 5-amino-6-(D-ribitylamino)uracil: step 1/2. Catalyzes the formation of 6,7-dimethyl-8-ribityllumazine by condensation of 5-amino-6-(D-ribitylamino)uracil with 3,4-dihydroxy-2-butanone 4-phosphate. This is the penultimate step in the biosynthesis of riboflavin. This chain is 6,7-dimethyl-8-ribityllumazine synthase, found in Leifsonia xyli subsp. xyli (strain CTCB07).